A 500-amino-acid polypeptide reads, in one-letter code: Protein ASPARTIC PROTEASE IN GUARD CELL 1 (500 aa).

Residues 1-24 (MAFPRFLSLLAVVTLSLFLTTTDA) form the signal peptide. One can recognise a Peptidase A1 domain in the interval 162–496 (YFSRIGVGTP…DLSKNVIGLS (335 aa)). Aspartate 180 is an active-site residue. 6 disulfide bridges follow: cysteine 190–cysteine 193, cysteine 196–cysteine 271, cysteine 217–cysteine 235, cysteine 222–cysteine 230, cysteine 307–cysteine 500, and cysteine 419–cysteine 461. Aspartate 379 is a catalytic residue.

This sequence belongs to the peptidase A1 family. In terms of tissue distribution, expressed in young seedlings, leaves, guard-cells, stems, flowers and siliques, but not in roots or mesophyll cells.

It is found in the endoplasmic reticulum. Inhibited by pepstatin A. In terms of biological role, aspartic protease involved in drought avoidance through abscisic acid signaling. In Arabidopsis thaliana (Mouse-ear cress), this protein is Protein ASPARTIC PROTEASE IN GUARD CELL 1 (ASPG1).